The primary structure comprises 1021 residues: Phytosulfokine receptor 1 (1021 aa).

The signal sequence occupies residues 1-24 (MGVLRVYVILILVGFCVQIVVVNS). The LRR 1 repeat unit spans residues 21 to 43 (VVNSQNLTCNSNDLKALEGFMRG). Residues Asn-26, Asn-54, and Asn-83 are each glycosylated (N-linked (GlcNAc...) asparagine). 16 LRR repeats span residues 85-109 (SGRV…VAKL), 110-133 (DQLK…LLNL), 135-156 (NLEV…LINL), 158-180 (SLRV…LCNN), 181-205 (LPRI…IGNC), 206-229 (SSVE…LFQL), 231-252 (NLSV…KLGK), 253-277 (LSNL…FLEL), 301-325 (SRSI…CSAM), 326-349 (TNLT…LPNC), 351-372 (RLKT…SFKN), 373-397 (FQSL…EILQ), 402-426 (LKTL…QFKN), 428-448 (KVLI…LSNS), 449-474 (PSLQ…SLNS), and 476-496 (FYLD…LTSL). Asn-116 and Asn-132 each carry an N-linked (GlcNAc...) asparagine glycan. N-linked (GlcNAc...) asparagine glycosylation is found at Asn-204, Asn-217, and Asn-231. Residues Asn-311, Asn-321, and Asn-327 are each glycosylated (N-linked (GlcNAc...) asparagine). N-linked (GlcNAc...) asparagine glycosylation is found at Asn-383 and Asn-388. Asn-482, Asn-546, Asn-568, Asn-576, and Asn-592 each carry an N-linked (GlcNAc...) asparagine glycan. An LRR 18; atypical repeat occupies 498 to 555 (SLVSKENAVEEPSPDFPFFKKKNTNAGGLQYNQPSSFPPMIDLSYNSLNGSIWPEFGD). LRR repeat units lie at residues 556 to 580 (LRQL…LSGM), 581 to 604 (TSLE…LVKL), and 606 to 629 (FLST…QFQT). Asn-632 is a glycosylation site (N-linked (GlcNAc...) asparagine). Residues 673-693 (VAVGTGLGTVFLLTVTLLIIL) form a helical membrane-spanning segment. Residues 743 to 1014 (FNQANIIGCG…PTTQQLVSWL (272 aa)) enclose the Protein kinase domain. Residues 749–757 (IGCGGFGLV) and Lys-771 contribute to the ATP site. The Proton acceptor role is filled by Asp-869.

This sequence belongs to the protein kinase superfamily. Ser/Thr protein kinase family. Post-translationally, N-glycosylated. Expressed ubiquitously in leaf, apical meristem, hypocotyl and root.

It localises to the cell membrane. It carries out the reaction L-seryl-[protein] + ATP = O-phospho-L-seryl-[protein] + ADP + H(+). It catalyses the reaction L-threonyl-[protein] + ATP = O-phospho-L-threonyl-[protein] + ADP + H(+). Phytosulfokine receptor with a serine/threonine-protein kinase activity. Regulates, in response to phytosulfokine binding, a signaling cascade involved in plant cell differentiation, organogenesis and somatic embryogenesis. The chain is Phytosulfokine receptor 1 (PSKR) from Daucus carota (Wild carrot).